We begin with the raw amino-acid sequence, 218 residues long: Adenylate kinase (218 aa).

Position 10-15 (10-15) interacts with ATP; that stretch reads GAGKGT. An NMP region spans residues 30–59; it reads STGDMLRAAVKAGTPLGQQAKAVMESGGLV. AMP contacts are provided by residues Thr31, Arg36, 57–59, 85–88, and Gln92; these read GLV and GFPR. An LID region spans residues 122-159; it reads GRRSHPASGRTYHVKFNPPKVEGKDDITGEDLIQRKDD. ATP is bound by residues Arg123 and 132-133; that span reads TY. AMP-binding residues include Arg156 and Arg167. Gly203 contacts ATP.

Belongs to the adenylate kinase family. Monomer.

The protein resides in the cytoplasm. The catalysed reaction is AMP + ATP = 2 ADP. It functions in the pathway purine metabolism; AMP biosynthesis via salvage pathway; AMP from ADP: step 1/1. Catalyzes the reversible transfer of the terminal phosphate group between ATP and AMP. Plays an important role in cellular energy homeostasis and in adenine nucleotide metabolism. The sequence is that of Adenylate kinase from Variovorax paradoxus (strain S110).